The chain runs to 410 residues: Aspartic proteinase Asp1 (410 aa).

Positions 1-23 (MTARLALLASLLLLLQLVPPSSA) are cleaved as a signal peptide. A propeptide spans 24 to 46 (VVLELHGNVYPIGHFFITMNIGD) (removed in mature form). Residues 38–392 (FFITMNIGDP…DSERSLLGWV (355 aa)) form the Peptidase A1 domain. Residues aspartate 56 and aspartate 257 contribute to the active site.

It belongs to the peptidase A1 family.

The protein is Aspartic proteinase Asp1 (ASP1) of Oryza sativa subsp. japonica (Rice).